Reading from the N-terminus, the 487-residue chain is Beta-barrel assembly-enhancing protease (487 aa).

The first 27 residues, 1-27 (MFRQLKKNLVATLIAAMTIGQVAPAFA), serve as a signal peptide directing secretion. Residue histidine 136 participates in Zn(2+) binding. Glutamate 137 is an active-site residue. Residues histidine 140 and glutamate 201 each contribute to the Zn(2+) site. Aspartate 205 acts as the Proton donor in catalysis. TPR repeat units lie at residues 309–342 (RAAQ…EPGN), 344–376 (WYLD…RTNP), 377–409 (VLQL…NKDD), and 427–460 (DQEL…VKLG).

This sequence belongs to the peptidase M48 family. BepA subfamily. Interacts with BamA and LoiP. Zn(2+) is required as a cofactor.

It is found in the periplasm. Protease activity is inhibited by the metal chelating reagents 1,10-phenanthroline and EDTA. Functionally, functions both as a chaperone and a metalloprotease. Maintains the integrity of the outer membrane by promoting either the assembly or the elimination of outer membrane proteins, depending on their folding state. Promotes disulfide rearrangement of LptD during its biogenesis, and proteolytic degradation of LptD and BamA when their proper assembly is compromised. May facilitate membrane attachment of LoiP under unfavorable conditions. This Escherichia coli (strain K12) protein is Beta-barrel assembly-enhancing protease.